A 305-amino-acid polypeptide reads, in one-letter code: MDFSPVGEESLGVRSMCFYVETRDVRILFDAGVSLAPRRFGLPPHPRELERARAVRAEILRLAEAADVVTVSHYHRDHFTPWYPSVYMATDGEMYKRVYGGKRVLLKSPQDLNWSQRRRHYGLSKALREAGAEAVYADGGEWAFGGTRVAASPPLWHGPAGSKTGRVLGFAVSDGEERLVFLPDVEGPLEPEPIAFARGARPTVVVVGGPPTYLGWDLEKAVKNLAELVELRPHTLVLAHHLLRDVQWREKVAPLFELAERRGVVVATYASLAGRPEELLEARRRELYAEEPAAVAEAGEGEEED.

It belongs to the UPF0282 family.

In Pyrobaculum neutrophilum (strain DSM 2338 / JCM 9278 / NBRC 100436 / V24Sta) (Thermoproteus neutrophilus), this protein is UPF0282 protein Tneu_0934.